The primary structure comprises 445 residues: Phosphatidate cytidylyltransferase 2 (445 aa).

Positions 1–39 (MTELRQRVAREPEAPPEDKESESEAKADGETASDSESRV) are enriched in basic and acidic residues. The disordered stretch occupies residues 1–52 (MTELRQRVAREPEAPPEDKESESEAKADGETASDSESRVEAVTQPPSADDTP). Ser21 carries the phosphoserine modification. At Thr31 the chain carries Phosphothreonine. Phosphoserine occurs at positions 33, 35, and 37. Phosphothreonine is present on Thr51. Transmembrane regions (helical) follow at residues 79-99 (MIAFFFIIIYLGPMVLMMIVM), 132-152 (FLLCVNYFFYGETVTDYFFTL), 166-186 (HRFISFTLYLTGFCMFVLSLV), 213-233 (LVIHNLFEGMIWFIVPISCVI), 262-282 (GFIGGFFATVVFGLLLSYVMS), and 340-360 (IALSTFASLIGPFGGFFASGF).

It belongs to the CDS family. Homodimer.

It is found in the endoplasmic reticulum membrane. It carries out the reaction a 1,2-diacyl-sn-glycero-3-phosphate + CTP + H(+) = a CDP-1,2-diacyl-sn-glycerol + diphosphate. It catalyses the reaction 1-octadecanoyl-2-(5Z,8Z,11Z,14Z-eicosatetraenoyl)-sn-glycero-3-phosphate + CTP + H(+) = 1-octadecanoyl-2-(5Z,8Z,11Z,14Z-eicosatetraenoyl)-sn-glycero-3-cytidine-5'-diphosphate + diphosphate. The enzyme catalyses 1-octadecanoyl-2-(9Z,12Z-octadecadienoyl)-sn-glycero-3-phosphate + CTP + H(+) = 1-octadecanoyl-2-(9Z,12Z-octadecadienoyl)-sn-glycero-3-cytidine-5'-diphosphate + diphosphate. The catalysed reaction is 1-hexadecanoyl-2-(5Z,8Z,11Z,14Z-eicosatetraenoyl)-sn-glycero-3-phosphate + CTP + H(+) = 1-hexadecanoyl-2-(5Z,8Z,11Z,14Z-eicosatetraenoyl)-sn-glycero-3-cytidine-5'-diphosphate + diphosphate. It carries out the reaction 1,2-di-(5Z,8Z,11Z,14Z)-eicosatetraenoyl-sn-glycero-3-phosphate + CTP + H(+) = 1,2-di-(5Z,8Z,11Z,14Z-eicosatetraenoyl)-sn-glycero-3-cytidine-5'-diphosphate + diphosphate. It catalyses the reaction 1-octadecanoyl-2-(9Z-octadecenoyl)-sn-glycero-3-phosphate + CTP + H(+) = 1-octadecanoyl-2-(9Z-octadecenoyl)-sn-glycero-3-cytidine-5'-diphosphate + diphosphate. The enzyme catalyses 1-octadecanoyl-2-(4Z,7Z,10Z,13Z,16Z,19Z-docosahexaenoyl)-sn-glycero-3-phosphate + CTP + H(+) = 1-octadecanoyl-2-(4Z,7Z,10Z,13Z,16Z,19Z-docosahexaenoyl)-sn-glycero-3-cytidine-5'-diphosphate + diphosphate. The catalysed reaction is 1,2-di-(9Z,12Z-octadecadienoyl)-sn-glycero-3-phosphate + CTP + H(+) = 1,2-di-(9Z,12Z-octadecadienoyl)-sn-glycero-3-cytidine-5'-diphosphate + diphosphate. It carries out the reaction 1,2-di-(9Z-octadecenoyl)-sn-glycero-3-phosphate + CTP + H(+) = 1,2-di-(9Z-octadecenoyl)-sn-glycero-3-cytidine-5'-diphosphate + diphosphate. Its pathway is phospholipid metabolism; CDP-diacylglycerol biosynthesis; CDP-diacylglycerol from sn-glycerol 3-phosphate: step 3/3. In terms of biological role, catalyzes the conversion of phosphatidic acid (PA) to CDP-diacylglycerol (CDP-DAG), an essential intermediate in the synthesis of phosphatidylglycerol, cardiolipin and phosphatidylinositol. Exhibits specificity for the nature of the acyl chains at the sn-1 and sn-2 positions in the substrate, PA and the preferred acyl chain composition is 1-stearoyl-2-arachidonoyl-sn-phosphatidic acid. Plays an important role in regulating the growth and maturation of lipid droplets which are storage organelles at the center of lipid and energy homeostasis. This Bos taurus (Bovine) protein is Phosphatidate cytidylyltransferase 2 (CDS2).